A 234-amino-acid chain; its full sequence is (5-formylfuran-3-yl)methyl phosphate synthase (234 aa).

The Schiff-base intermediate with substrate role is filled by K27. K85 acts as the Proton acceptor in catalysis.

This sequence belongs to the MfnB family.

The enzyme catalyses 2 D-glyceraldehyde 3-phosphate = 4-(hydroxymethyl)-2-furancarboxaldehyde phosphate + phosphate + 2 H2O. The protein operates within cofactor biosynthesis; methanofuran biosynthesis. Catalyzes the formation of 4-(hydroxymethyl)-2-furancarboxaldehyde phosphate (4-HFC-P) from two molecules of glyceraldehyde-3-P (GA-3-P). The sequence is that of (5-formylfuran-3-yl)methyl phosphate synthase from Methanosarcina mazei (strain ATCC BAA-159 / DSM 3647 / Goe1 / Go1 / JCM 11833 / OCM 88) (Methanosarcina frisia).